The chain runs to 243 residues: METNFIDLRNLTELTVREFMSNHNVAGHDVDHFIAVRNHAIKALKYENISNSKKLQVEFAAMLHDVDDPKIFSQSIDYQNAKYILDTIFTKMSFENIISDCTYDVFKQGIVTLISLVSCSKNGDDGVEESWMAIPRDADRLEAIGKIGIQRCTDYANHIKLPYYLDSTPRAKTSEEALSFANRDRFDRYKNGHKSVSMIDHYYDKLLHIGRPEYLCSNNPYILEKSNKRNQEMIDYVINFKFE.

This is an uncharacterized protein from Acanthamoeba polyphaga (Amoeba).